Reading from the N-terminus, the 280-residue chain is Acetyl-coenzyme A carboxylase carboxyl transferase subunit beta (280 aa).

The CoA carboxyltransferase N-terminal domain occupies 26–280 (LWQKCPRCGE…TKLLAWHSQK (255 aa)). Zn(2+) is bound by residues C30, C33, C49, and C52. The C4-type zinc-finger motif lies at 30-52 (CPRCGEIIFNKELEKNFKVCPKC).

Belongs to the AccD/PCCB family. In terms of assembly, acetyl-CoA carboxylase is a heterohexamer composed of biotin carboxyl carrier protein (AccB), biotin carboxylase (AccC) and two subunits each of ACCase subunit alpha (AccA) and ACCase subunit beta (AccD). It depends on Zn(2+) as a cofactor.

Its subcellular location is the cytoplasm. The catalysed reaction is N(6)-carboxybiotinyl-L-lysyl-[protein] + acetyl-CoA = N(6)-biotinyl-L-lysyl-[protein] + malonyl-CoA. It participates in lipid metabolism; malonyl-CoA biosynthesis; malonyl-CoA from acetyl-CoA: step 1/1. In terms of biological role, component of the acetyl coenzyme A carboxylase (ACC) complex. Biotin carboxylase (BC) catalyzes the carboxylation of biotin on its carrier protein (BCCP) and then the CO(2) group is transferred by the transcarboxylase to acetyl-CoA to form malonyl-CoA. The polypeptide is Acetyl-coenzyme A carboxylase carboxyl transferase subunit beta (Carboxydothermus hydrogenoformans (strain ATCC BAA-161 / DSM 6008 / Z-2901)).